The sequence spans 520 residues: Ribonuclease Y (520 aa).

Residues 4–24 traverse the membrane as a helical segment; the sequence is VSGILLVLIGLLAGVGLGVLL. The KH domain occupies 210–270; sequence TVSVVNLPNE…VRREVARVSL (61 aa). The 94-residue stretch at 336–429 folds into the HD domain; that stretch reads VLQHSREVAF…VQAADALSGA (94 aa).

It belongs to the RNase Y family.

The protein resides in the cell membrane. In terms of biological role, endoribonuclease that initiates mRNA decay. The polypeptide is Ribonuclease Y (Syntrophobacter fumaroxidans (strain DSM 10017 / MPOB)).